A 274-amino-acid polypeptide reads, in one-letter code: Proto-oncogene FRAT1 (274 aa).

4 disordered regions span residues 1 to 24 (MPCR…DDSF), 55 to 107 (AHDR…PGAV), 132 to 194 (GASA…DDPH), and 232 to 274 (GPLS…VPGS). Over residues 7-23 (EEEEAGDEAEGEEDDDS) the composition is skewed to acidic residues. The segment at 191–214 (DDPHRLLQQLVLSGNLIKEAVRRL) is involved in GSK-3 binding. Phosphoserine is present on residues serine 243 and serine 246.

Belongs to the GSK-3-binding protein family. In terms of assembly, binds DVL1. Binds GSK-3 and prevent GSK-3-dependent phosphorylation. Post-translationally, phosphorylated. In terms of tissue distribution, highly expressed in testis. Lower level of expression in spleen, thymus and brain.

The protein localises to the cytoplasm. Its function is as follows. Positively regulates the Wnt signaling pathway by stabilizing beta-catenin through the association with GSK-3. May play a role in tumor progression and collaborate with PIM1 and MYC in lymphomagenesis. The sequence is that of Proto-oncogene FRAT1 (Frat1) from Mus musculus (Mouse).